A 443-amino-acid chain; its full sequence is Xaa-Pro dipeptidase (443 aa).

Mn(2+) contacts are provided by aspartate 246, aspartate 257, histidine 339, glutamate 384, and glutamate 423.

Belongs to the peptidase M24B family. Bacterial-type prolidase subfamily. The cofactor is Mn(2+).

The catalysed reaction is Xaa-L-Pro dipeptide + H2O = an L-alpha-amino acid + L-proline. Splits dipeptides with a prolyl residue in the C-terminal position. This is Xaa-Pro dipeptidase from Edwardsiella ictaluri (strain 93-146).